Consider the following 151-residue polypeptide: MKYSKPKSKSILSLDIGTKRIGLAYCDSLFITVNILPALRREKNKNEFKTIKSHIKKLNLTGFIVGLPLDDKGRMTSQAFDCKTYGEYLFNELKLPFSFVNEHSSTWESENRFGVKKDKSGLIDSLSAKVILEQWIQEGPELKELMGNKQI.

This sequence belongs to the YqgF nuclease family.

The protein resides in the cytoplasm. Could be a nuclease involved in processing of the 5'-end of pre-16S rRNA. The protein is Putative pre-16S rRNA nuclease of Prochlorococcus marinus (strain MIT 9515).